We begin with the raw amino-acid sequence, 860 residues long: Leucine--tRNA ligase (860 aa).

Positions 42–52 match the 'HIGH' region motif; the sequence is PYPSGRLHMGH. Positions 619-623 match the 'KMSKS' region motif; sequence KMSKS. An ATP-binding site is contributed by Lys-622.

This sequence belongs to the class-I aminoacyl-tRNA synthetase family.

The protein localises to the cytoplasm. The catalysed reaction is tRNA(Leu) + L-leucine + ATP = L-leucyl-tRNA(Leu) + AMP + diphosphate. This chain is Leucine--tRNA ligase, found in Actinobacillus succinogenes (strain ATCC 55618 / DSM 22257 / CCUG 43843 / 130Z).